A 324-amino-acid polypeptide reads, in one-letter code: tRNA pseudouridine synthase B (324 aa).

Substrate is bound at residue His43. Asp48 functions as the Nucleophile in the catalytic mechanism. Tyr76, Tyr179, and Leu200 together coordinate substrate.

This sequence belongs to the pseudouridine synthase TruB family. Type 1 subfamily.

The enzyme catalyses uridine(55) in tRNA = pseudouridine(55) in tRNA. Responsible for synthesis of pseudouridine from uracil-55 in the psi GC loop of transfer RNAs. This Yersinia pestis bv. Antiqua (strain Nepal516) protein is tRNA pseudouridine synthase B.